The chain runs to 361 residues: MSQPTLFIDRDGTLIDEPKTDFQIDSLEKLKLERNVIPALLKLKDHYRFVMVSNQDGLGTDSFPQENFDKPHNAMLEIFRSQGIEFDAILICPHKPEDNCDCRKPKIKLLKKYIDKKLFDPAHSFVIGDRATDVQLAENLGIQALQYHPEKLDWDLIVEKLLPKTTACERPPRYAEVVRTTKETDIKVQVWLDETGVNQISTGVGFFDHMLDQIATHGGFRMNVQCKGDLWIDEHHTVEDTALALGTALKQALGDKRGIQRFGFVLPMDECKAECTMDLSGRPYFKFKAKFKREKVGDFSTEMTEHFFQSIAYTLMATLHLKTQGDNDHHKIESLFKVFGRTLRQCIKVEGNELPSSKGVL.

The tract at residues 1 to 172 (MSQPTLFIDR…PKTTACERPP (172 aa)) is histidinol-phosphatase. Asp9 functions as the Nucleophile in the catalytic mechanism. 2 residues coordinate Mg(2+): Asp9 and Asp11. Residue Asp11 is the Proton donor of the active site. Zn(2+) is bound by residues Cys92, His94, Cys100, and Cys102. Position 129 (Asp129) interacts with Mg(2+). The imidazoleglycerol-phosphate dehydratase stretch occupies residues 173 to 361 (RYAEVVRTTK…NELPSSKGVL (189 aa)).

In the N-terminal section; belongs to the histidinol-phosphatase family. This sequence in the C-terminal section; belongs to the imidazoleglycerol-phosphate dehydratase family. Mg(2+) serves as cofactor. Requires Zn(2+) as cofactor.

The protein resides in the cytoplasm. It catalyses the reaction D-erythro-1-(imidazol-4-yl)glycerol 3-phosphate = 3-(imidazol-4-yl)-2-oxopropyl phosphate + H2O. It carries out the reaction L-histidinol phosphate + H2O = L-histidinol + phosphate. It participates in amino-acid biosynthesis; L-histidine biosynthesis; L-histidine from 5-phospho-alpha-D-ribose 1-diphosphate: step 6/9. The protein operates within amino-acid biosynthesis; L-histidine biosynthesis; L-histidine from 5-phospho-alpha-D-ribose 1-diphosphate: step 8/9. The polypeptide is Histidine biosynthesis bifunctional protein HisB (Actinobacillus pleuropneumoniae serotype 7 (strain AP76)).